The chain runs to 201 residues: Lipopolysaccharide core heptose(II)-phosphate phosphatase (201 aa).

The N-terminal stretch at 1 to 35 is a signal peptide; the sequence is MLAFTLRFIKNKRYLATLAGALVIIAGLTSQHAWS.

Belongs to the phosphoglycerate mutase family. Ais subfamily.

The protein localises to the periplasm. It functions in the pathway bacterial outer membrane biogenesis; lipopolysaccharide metabolism. Catalyzes the dephosphorylation of heptose(II) of the outer membrane lipopolysaccharide core. This Salmonella choleraesuis (strain SC-B67) protein is Lipopolysaccharide core heptose(II)-phosphate phosphatase.